We begin with the raw amino-acid sequence, 384 residues long: Zinc finger CCCH domain-containing protein 12 (384 aa).

2 disordered regions span residues 1 to 32 (MSHHRRDSGGDVVHVIPTNNPPPDNWFPNLGD) and 46 to 81 (WAMNPDNTSGDNNGPPNKKTRGSPSSSSATTTSAAS). Residues 50–60 (PDNTSGDNNGP) show a composition bias toward polar residues. The segment covering 70 to 81 (SSSSATTTSAAS) has biased composition (low complexity). C3H1-type zinc fingers lie at residues 91-118 (FFKTKLCCKFRAGTCPYITNCNFAHTVE) and 172-200 (SFKGRHCKKFYTEEGCPYGESCTFLHDEA). Positions 211–231 (LGPGGYGSGGGGGSGGGSVGG) are disordered. The segment covering 212–231 (GPGGYGSGGGGGSGGGSVGG) has biased composition (gly residues). The C3H1-type 3 zinc finger occupies 260-288 (NWKTRICNKWEITGYCPFGAKCHFAHGAA). The tract at residues 299–335 (EEEGKDGVSPNPDTKQTVQNPKGLSDTTTLLSPGVPH) is disordered. Residues 309-329 (NPDTKQTVQNPKGLSDTTTLL) show a composition bias toward polar residues.

This Arabidopsis thaliana (Mouse-ear cress) protein is Zinc finger CCCH domain-containing protein 12.